The primary structure comprises 740 residues: Ribosomal protein S6 kinase alpha-3 (740 aa).

Residues 1-26 are disordered; that stretch reads MPLAQLADPWQKMAVESPSDSAENGQ. The 260-residue stretch at 68–327 folds into the Protein kinase 1 domain; the sequence is FELLKVLGQG…VEEIKRHSFF (260 aa). ATP is bound by residues 74-82 and Lys-100; that span reads LGQGSFGKV. Asp-193 acts as the Proton acceptor in catalysis. At Ser-227 the chain carries Phosphoserine; by PDPK1. Positions 328–397 constitute an AGC-kinase C-terminal domain; that stretch reads STIDWNKLYR…VAITSDDESQ (70 aa). At Thr-365 the chain carries Phosphothreonine. Ser-369 and Ser-375 each carry phosphoserine. Position 386 is a phosphoserine; by autocatalysis and MAPKAPK2 (Ser-386). Ser-415 carries the phosphoserine modification. The region spanning 422–679 is the Protein kinase 2 domain; the sequence is YEVKEDIGVG…AALVLRHPWI (258 aa). ATP-binding positions include 428 to 436 and Lys-451; that span reads IGVGSYSVC. Tyr-529 carries the post-translational modification Phosphotyrosine; by FGFR3. Asp-539 functions as the Proton acceptor in the catalytic mechanism. Phosphoserine occurs at positions 556 and 715.

Belongs to the protein kinase superfamily. AGC Ser/Thr protein kinase family. S6 kinase subfamily. As to quaternary structure, forms a complex with either MAPK1/ERK2 or MAPK3/ERK1 in quiescent cells. Transiently dissociates following mitogenic stimulation. Interacts with NFATC4, ETV1/ER81 and FGFR1. It depends on Mg(2+) as a cofactor. In terms of processing, activated by phosphorylation at Ser-227 by PDPK1. Autophosphorylated on Ser-386, as part of the activation process. May be phosphorylated at Thr-365 and Ser-369 by MAPK1/ERK2 and MAPK3/ERK1. Can also be activated via phosphorylation at Ser-386 by MAPKAPK2. N-terminal myristoylation results in an activated kinase in the absence of added growth factors. In terms of tissue distribution, intestine, thymus, lung, heart and brain.

Its subcellular location is the nucleus. It is found in the cytoplasm. The enzyme catalyses L-seryl-[protein] + ATP = O-phospho-L-seryl-[protein] + ADP + H(+). It carries out the reaction L-threonyl-[protein] + ATP = O-phospho-L-threonyl-[protein] + ADP + H(+). Upon extracellular signal or mitogen stimulation, phosphorylated at Thr-577 in the C-terminal kinase domain (CTKD) by MAPK1/ERK2 and MAPK3/ERK1. The activated CTKD then autophosphorylates Ser-386, allowing binding of PDPK1, which in turn phosphorylates Ser-227 in the N-terminal kinase domain (NTDK) leading to the full activation of the protein and subsequent phosphorylation of the substrates by the NTKD. In terms of biological role, serine/threonine-protein kinase that acts downstream of ERK (MAPK1/ERK2 and MAPK3/ERK1) signaling and mediates mitogenic and stress-induced activation of the transcription factors CREB1, ETV1/ER81 and NR4A1/NUR77, regulates translation through RPS6 and EIF4B phosphorylation, and mediates cellular proliferation, survival, and differentiation by modulating mTOR signaling and repressing pro-apoptotic function of BAD and DAPK1. In fibroblast, is required for EGF-stimulated phosphorylation of CREB1 and histone H3 at 'Ser-10', which results in the subsequent transcriptional activation of several immediate-early genes. In response to mitogenic stimulation (EGF and PMA), phosphorylates and activates NR4A1/NUR77 and ETV1/ER81 transcription factors and the cofactor CREBBP. Upon insulin-derived signal, acts indirectly on the transcription regulation of several genes by phosphorylating GSK3B at 'Ser-9' and inhibiting its activity. Phosphorylates RPS6 in response to serum or EGF via an mTOR-independent mechanism and promotes translation initiation by facilitating assembly of the preinitiation complex. In response to insulin, phosphorylates EIF4B, enhancing EIF4B affinity for the EIF3 complex and stimulating cap-dependent translation. Is involved in the mTOR nutrient-sensing pathway by directly phosphorylating TSC2 at 'Ser-1798', which potently inhibits TSC2 ability to suppress mTOR signaling, and mediates phosphorylation of RPTOR, which regulates mTORC1 activity and may promote rapamycin-sensitive signaling independently of the PI3K/AKT pathway. Mediates cell survival by phosphorylating the pro-apoptotic proteins BAD and DAPK1 and suppressing their pro-apoptotic function. Promotes the survival of hepatic stellate cells by phosphorylating CEBPB in response to the hepatotoxin carbon tetrachloride (CCl4). Is involved in cell cycle regulation by phosphorylating the CDK inhibitor CDKN1B, which promotes CDKN1B association with 14-3-3 proteins and prevents its translocation to the nucleus and inhibition of G1 progression. In LPS-stimulated dendritic cells, is involved in TLR4-induced macropinocytosis, and in myeloma cells, acts as effector of FGFR3-mediated transformation signaling, after direct phosphorylation at Tyr-529 by FGFR3. Negatively regulates EGF-induced MAPK1/3 phosphorylation via phosphorylation of SOS1. Phosphorylates SOS1 at 'Ser-1134' and 'Ser-1161' that create YWHAB and YWHAE binding sites and which contribute to the negative regulation of MAPK1/3 phosphorylation. Phosphorylates EPHA2 at 'Ser-897', the RPS6KA-EPHA2 signaling pathway controls cell migration. Acts as a regulator of osteoblast differentiation by mediating phosphorylation of ATF4, thereby promoting ATF4 transactivation activity. The polypeptide is Ribosomal protein S6 kinase alpha-3 (Rps6ka3) (Mus musculus (Mouse)).